A 507-amino-acid polypeptide reads, in one-letter code: Maturase K (507 aa).

It belongs to the intron maturase 2 family. MatK subfamily.

Its subcellular location is the plastid. It localises to the chloroplast. Its function is as follows. Usually encoded in the trnK tRNA gene intron. Probably assists in splicing its own and other chloroplast group II introns. The protein is Maturase K of Humulus lupulus (European hop).